Consider the following 411-residue polypeptide: 2,3-bisphosphoglycerate-independent phosphoglycerate mutase 1 (411 aa).

Belongs to the BPG-independent phosphoglycerate mutase family. A-PGAM subfamily. In terms of assembly, homotetramer. Mg(2+) is required as a cofactor.

The catalysed reaction is (2R)-2-phosphoglycerate = (2R)-3-phosphoglycerate. The protein operates within carbohydrate degradation; glycolysis; pyruvate from D-glyceraldehyde 3-phosphate: step 3/5. With respect to regulation, inhibited to approximately 20% by EDTA. In terms of biological role, catalyzes the interconversion of 2-phosphoglycerate and 3-phosphoglycerate. The protein is 2,3-bisphosphoglycerate-independent phosphoglycerate mutase 1 (apgM1) of Methanocaldococcus jannaschii (strain ATCC 43067 / DSM 2661 / JAL-1 / JCM 10045 / NBRC 100440) (Methanococcus jannaschii).